Reading from the N-terminus, the 83-residue chain is Small ribosomal subunit protein uS17 (83 aa).

The protein belongs to the universal ribosomal protein uS17 family. As to quaternary structure, part of the 30S ribosomal subunit.

Its function is as follows. One of the primary rRNA binding proteins, it binds specifically to the 5'-end of 16S ribosomal RNA. The sequence is that of Small ribosomal subunit protein uS17 from Ehrlichia canis (strain Jake).